The chain runs to 587 residues: Arginine--tRNA ligase (587 aa).

Positions 126 to 136 (ANPTGPLHVGH) match the 'HIGH' region motif.

Belongs to the class-I aminoacyl-tRNA synthetase family. In terms of assembly, monomer.

The protein resides in the cytoplasm. It carries out the reaction tRNA(Arg) + L-arginine + ATP = L-arginyl-tRNA(Arg) + AMP + diphosphate. This chain is Arginine--tRNA ligase, found in Azoarcus sp. (strain BH72).